The primary structure comprises 64 residues: Metallothionein-A (64 aa).

The protein belongs to the metallothionein superfamily. Type 4 family.

In terms of biological role, metallothioneins have a high content of cysteine residues that bind various heavy metals. The protein is Metallothionein-A (MTA) of Strongylocentrotus purpuratus (Purple sea urchin).